The sequence spans 246 residues: Mast cell protease 2 (246 aa).

The first 19 residues, 1-19, serve as a signal peptide directing secretion; sequence MHRPPLPLVLLLLCCRAQA. Residues 20–21 constitute a propeptide, activation peptide; that stretch reads GE. Positions 22-244 constitute a Peptidase S1 domain; sequence IIGGTESKPH…YRPWIDEVLK (223 aa). C51 and C67 are disulfide-bonded. Catalysis depends on charge relay system residues H66 and D109. The N-linked (GlcNAc...) asparagine glycan is linked to N120. Cystine bridges form between C143–C208 and C174–C187. S202 acts as the Charge relay system in catalysis.

The protein belongs to the peptidase S1 family. Granzyme subfamily.

It localises to the secreted. It is found in the cytoplasmic granule. In terms of biological role, putative mast cell chymase. This is Mast cell protease 2 from Ovis aries (Sheep).